The following is a 527-amino-acid chain: Hopanoid C-2 methylase (527 aa).

The B12-binding domain occupies 36 to 148; that stretch reads VAAFMPPQGL…AKLTHDVTRP (113 aa). A Radical SAM core domain is found at 173-408; sequence AECSKYLLGS…HDQVVAMWKD (236 aa). Residues cysteine 189, cysteine 193, and cysteine 196 each coordinate [4Fe-4S] cluster.

This sequence belongs to the radical SAM superfamily. [4Fe-4S] cluster is required as a cofactor.

Its function is as follows. Required for methylation of hopanoids at the C-2 position. In Rhodopseudomonas palustris (strain TIE-1), this protein is Hopanoid C-2 methylase.